Here is a 432-residue protein sequence, read N- to C-terminus: Adenylosuccinate synthetase (432 aa).

GTP is bound by residues 12–18 and 40–42; these read GDEGKGK and GHT. The Proton acceptor role is filled by aspartate 13. Mg(2+)-binding residues include aspartate 13 and glycine 40. IMP contacts are provided by residues 13-16, 38-41, threonine 129, arginine 143, glutamine 224, threonine 239, and arginine 303; these read DEGK and NAGH. Histidine 41 (proton donor) is an active-site residue. Residue 299-305 participates in substrate binding; sequence VTTGRRR. GTP is bound by residues arginine 305, 331-333, and 413-415; these read KLD and GVG.

This sequence belongs to the adenylosuccinate synthetase family. In terms of assembly, homodimer. Mg(2+) serves as cofactor.

Its subcellular location is the cytoplasm. It carries out the reaction IMP + L-aspartate + GTP = N(6)-(1,2-dicarboxyethyl)-AMP + GDP + phosphate + 2 H(+). The protein operates within purine metabolism; AMP biosynthesis via de novo pathway; AMP from IMP: step 1/2. Its function is as follows. Plays an important role in the de novo pathway of purine nucleotide biosynthesis. Catalyzes the first committed step in the biosynthesis of AMP from IMP. In Mycobacterium marinum (strain ATCC BAA-535 / M), this protein is Adenylosuccinate synthetase.